The sequence spans 132 residues: Small ribosomal subunit protein uS8c (132 aa).

It belongs to the universal ribosomal protein uS8 family. Part of the 30S ribosomal subunit.

It is found in the plastid. Its subcellular location is the cyanelle. In terms of biological role, one of the primary rRNA binding proteins, it binds directly to 16S rRNA central domain where it helps coordinate assembly of the platform of the 30S subunit. This is Small ribosomal subunit protein uS8c (rps8) from Cyanophora paradoxa.